A 562-amino-acid polypeptide reads, in one-letter code: BOS complex subunit NCLN (562 aa).

Residues 1–41 (MLEEAGEVLESVLKASCLPLSFLLFVPAVLLLLGPPPAAEA) form the signal peptide. Over 42-521 (AHESTVYRMQ…VMNAYRVKPA (480 aa)) the chain is Extracellular. N-linked (GlcNAc...) asparagine glycosylation occurs at asparagine 240. The segment at 420–447 (GFDEGHLQPNREGSTCRSADLHGSDADP) is disordered. Residues 522-542 (IFDLLLAVCIAAYLGVAYVAV) form a helical membrane-spanning segment. The Cytoplasmic portion of the chain corresponds to 543–562 (QNFGLLYRMIQRLSLKTKQQ).

This sequence belongs to the nicastrin family. Component of the multi-pass translocon (MPT) complex.

The protein resides in the endoplasmic reticulum membrane. Component of the multi-pass translocon (MPT) complex that mediates insertion of multi-pass membrane proteins into the lipid bilayer of membranes. The MPT complex takes over after the SEC61 complex: following membrane insertion of the first few transmembrane segments of proteins by the SEC61 complex, the MPT complex occludes the lateral gate of the SEC61 complex to promote insertion of subsequent transmembrane regions. May antagonize Nodal signaling and subsequent organization of axial structures during mesodermal patterning, via its interaction with NOMO. This Gallus gallus (Chicken) protein is BOS complex subunit NCLN (NCLN).